Reading from the N-terminus, the 447-residue chain is Tektin-4 (447 aa).

Coiled-coil stretches lie at residues 322 to 348 (LRKT…DKEA) and 375 to 423 (FRLL…TNSL).

It belongs to the tektin family. Microtubule inner protein component of sperm flagellar doublet microtubules. In terms of processing, ubiquitinated, leading to its degradation. Deubiquitinated by USP16, promoting its stability. Detected in testis, where it is weakly expressed in round spermatids, and strongly expressed in the flagellum of step 16 elongated spermatids (at protein level). Expressed in spermatozoa. In the sperm flagellum, localizes to the principal piece and midpiece (at protein level). Specifically expressed in testis; not detected in other tissues tested.

Its subcellular location is the cytoplasm. It localises to the cytoskeleton. The protein resides in the cilium axoneme. The protein localises to the flagellum axoneme. Functionally, microtubule inner protein (MIP) part of the dynein-decorated doublet microtubules (DMTs) in cilia and flagellar axoneme. Forms filamentous polymers in the walls of ciliary and flagellar microtubules. Contributes to normal sperm motility. This chain is Tektin-4 (Tekt4), found in Mus musculus (Mouse).